A 187-amino-acid polypeptide reads, in one-letter code: Major allergen Equ c 1 (187 aa).

The segment at residues 1 to 15 is a signal peptide (or 16, or 21); the sequence is MKLLLLCLGLILVCA. Asparagine 53 and asparagine 68 each carry an N-linked (GlcNAc...) asparagine glycan. An intrachain disulfide couples cysteine 83 to cysteine 176.

Belongs to the calycin superfamily. Lipocalin family. In terms of assembly, homodimer. Several N-terminal ends may be due to cleavage by signal peptidase at different sites or may be generated by proteolytic processing of the secreted protein. Post-translationally, analysis of the sugar composition shows the presence of GalNAc, Gal, NeuAc, GlcNAc, and Man. May be also O-glycosylated. In terms of tissue distribution, expressed in liver and in sublingual and submaxillary salivary glands. Highly concentrated in secretory fluid such as saliva and urine as well as in hair dandruff extract.

It localises to the secreted. The polypeptide is Major allergen Equ c 1 (Equus caballus (Horse)).